The sequence spans 96 residues: NADH-ubiquinone oxidoreductase chain 4L (96 aa).

A run of 3 helical transmembrane segments spans residues 2–22 (IMFL…FCFV), 28–48 (LLSM…MLFI), and 62–82 (MFLT…VSMI).

Belongs to the complex I subunit 4L family.

Its subcellular location is the mitochondrion membrane. The enzyme catalyses a ubiquinone + NADH + 5 H(+)(in) = a ubiquinol + NAD(+) + 4 H(+)(out). In terms of biological role, core subunit of the mitochondrial membrane respiratory chain NADH dehydrogenase (Complex I) that is believed to belong to the minimal assembly required for catalysis. Complex I functions in the transfer of electrons from NADH to the respiratory chain. The immediate electron acceptor for the enzyme is believed to be ubiquinone. The polypeptide is NADH-ubiquinone oxidoreductase chain 4L (mt:ND4L) (Drosophila nasuta F (Fruit fly)).